Consider the following 211-residue polypeptide: ATP phosphoribosyltransferase (211 aa).

This sequence belongs to the ATP phosphoribosyltransferase family. Short subfamily. Heteromultimer composed of HisG and HisZ subunits.

It localises to the cytoplasm. The enzyme catalyses 1-(5-phospho-beta-D-ribosyl)-ATP + diphosphate = 5-phospho-alpha-D-ribose 1-diphosphate + ATP. The protein operates within amino-acid biosynthesis; L-histidine biosynthesis; L-histidine from 5-phospho-alpha-D-ribose 1-diphosphate: step 1/9. In terms of biological role, catalyzes the condensation of ATP and 5-phosphoribose 1-diphosphate to form N'-(5'-phosphoribosyl)-ATP (PR-ATP). Has a crucial role in the pathway because the rate of histidine biosynthesis seems to be controlled primarily by regulation of HisG enzymatic activity. This chain is ATP phosphoribosyltransferase, found in Pseudomonas fluorescens (strain ATCC BAA-477 / NRRL B-23932 / Pf-5).